A 234-amino-acid polypeptide reads, in one-letter code: Phosphoribosylaminoimidazole-succinocarboxamide synthase (234 aa).

The protein belongs to the SAICAR synthetase family.

It catalyses the reaction 5-amino-1-(5-phospho-D-ribosyl)imidazole-4-carboxylate + L-aspartate + ATP = (2S)-2-[5-amino-1-(5-phospho-beta-D-ribosyl)imidazole-4-carboxamido]succinate + ADP + phosphate + 2 H(+). Its pathway is purine metabolism; IMP biosynthesis via de novo pathway; 5-amino-1-(5-phospho-D-ribosyl)imidazole-4-carboxamide from 5-amino-1-(5-phospho-D-ribosyl)imidazole-4-carboxylate: step 1/2. The protein is Phosphoribosylaminoimidazole-succinocarboxamide synthase of Staphylococcus aureus (strain COL).